The chain runs to 150 residues: SsrA-binding protein (150 aa).

The protein belongs to the SmpB family.

The protein resides in the cytoplasm. Required for rescue of stalled ribosomes mediated by trans-translation. Binds to transfer-messenger RNA (tmRNA), required for stable association of tmRNA with ribosomes. tmRNA and SmpB together mimic tRNA shape, replacing the anticodon stem-loop with SmpB. tmRNA is encoded by the ssrA gene; the 2 termini fold to resemble tRNA(Ala) and it encodes a 'tag peptide', a short internal open reading frame. During trans-translation Ala-aminoacylated tmRNA acts like a tRNA, entering the A-site of stalled ribosomes, displacing the stalled mRNA. The ribosome then switches to translate the ORF on the tmRNA; the nascent peptide is terminated with the 'tag peptide' encoded by the tmRNA and targeted for degradation. The ribosome is freed to recommence translation, which seems to be the essential function of trans-translation. The chain is SsrA-binding protein from Polynucleobacter asymbioticus (strain DSM 18221 / CIP 109841 / QLW-P1DMWA-1) (Polynucleobacter necessarius subsp. asymbioticus).